Consider the following 150-residue polypeptide: uncharacterized protein (150 aa).

Repeat copies occupy residues 101-105 (FHEVN), 106-110 (HHEVN), 111-115 (HHKIN), 116-120 (HHEVN), and 121-125 (HHKIN). The tract at residues 101 to 125 (FHEVNHHEVNHHKINHHEVNHHKIN) is 5 X 5 AA tandem repeats of [FH]-H-[EK]-[IV]-N.

It belongs to the asfivirus D129L family.

This is an uncharacterized protein from African swine fever virus (isolate Tick/Malawi/Lil 20-1/1983) (ASFV).